The following is an 84-amino-acid chain: Large ribosomal subunit protein bL28 (84 aa).

Belongs to the bacterial ribosomal protein bL28 family.

The chain is Large ribosomal subunit protein bL28 from Deinococcus geothermalis (strain DSM 11300 / CIP 105573 / AG-3a).